Consider the following 230-residue polypeptide: UPF0173 metal-dependent hydrolase Rsph17025_2229 (230 aa).

Belongs to the UPF0173 family.

The protein is UPF0173 metal-dependent hydrolase Rsph17025_2229 of Cereibacter sphaeroides (strain ATCC 17025 / ATH 2.4.3) (Rhodobacter sphaeroides).